Reading from the N-terminus, the 458-residue chain is UDP-N-acetylmuramate--L-alanine ligase (458 aa).

Gly-118 to Thr-124 is a binding site for ATP.

It belongs to the MurCDEF family.

It is found in the cytoplasm. It catalyses the reaction UDP-N-acetyl-alpha-D-muramate + L-alanine + ATP = UDP-N-acetyl-alpha-D-muramoyl-L-alanine + ADP + phosphate + H(+). It functions in the pathway cell wall biogenesis; peptidoglycan biosynthesis. Cell wall formation. In Clostridium acetobutylicum (strain ATCC 824 / DSM 792 / JCM 1419 / IAM 19013 / LMG 5710 / NBRC 13948 / NRRL B-527 / VKM B-1787 / 2291 / W), this protein is UDP-N-acetylmuramate--L-alanine ligase.